The following is a 78-amino-acid chain: MAAGVKAAELRELSEEELVTKLREAKAELFNLRVQAATGQLDNNRRLQVIRREIARIYTIMRERELGLSAAPTEVTAG.

This sequence belongs to the universal ribosomal protein uL29 family.

In Salinispora arenicola (strain CNS-205), this protein is Large ribosomal subunit protein uL29.